The sequence spans 309 residues: Protein FdhE homolog (309 aa).

It belongs to the FdhE family.

It is found in the cytoplasm. Its function is as follows. Necessary for formate dehydrogenase activity. This chain is Protein FdhE homolog, found in Citrobacter koseri (strain ATCC BAA-895 / CDC 4225-83 / SGSC4696).